The chain runs to 324 residues: Mitochondrial thiamine pyrophosphate carrier 1 (324 aa).

Solcar repeat units lie at residues 12-110 (GNRI…ISSA), 119-205 (PQPV…LRSP), and 212-307 (PFGT…VLGL). Helical transmembrane passes span 15–35 (IQVV…VAPL), 79–99 (ITGL…YGGI), 125–145 (FISG…LDLL), 182–202 (TAAI…YEAL), 218–238 (AGAG…LDLV), and 282–299 (GLTV…VTMW).

It belongs to the mitochondrial carrier (TC 2.A.29) family.

The protein localises to the mitochondrion inner membrane. Mitochondrial transporter that mediates uptake of thiamine pyrophosphate (ThPP) into mitochondria. In Ajellomyces capsulatus (strain NAm1 / WU24) (Darling's disease fungus), this protein is Mitochondrial thiamine pyrophosphate carrier 1 (TPC1).